The chain runs to 210 residues: MTNLNYQQTHFVMSAPDIRHLPSDCGIEVAFAGRSNAGKSSALNTLTNQKSLARTSKTPGRTQLINLFEVVDGKRLVDLPGYGYAEVPEEMKRKWQRALGEYLEKRQSLQGLVVLMDIRHPLKDLDQQMIQWAVESNIQVLVLLTKADKLASGARKAQLNMVREAVLAFNGDVQVEAFSSLKKQGVDKLRQKLDSWFSELAPVEEIQDGE.

One can recognise an EngB-type G domain in the interval 25-199; it reads CGIEVAFAGR…RQKLDSWFSE (175 aa). Residues 33 to 40, 60 to 64, 78 to 81, 145 to 148, and 178 to 180 each bind GTP; these read GRSNAGKS, GRTQL, DLPG, TKAD, and FSS. Mg(2+) is bound by residues S40 and T62.

The protein belongs to the TRAFAC class TrmE-Era-EngA-EngB-Septin-like GTPase superfamily. EngB GTPase family. Mg(2+) is required as a cofactor.

Necessary for normal cell division and for the maintenance of normal septation. In Salmonella agona (strain SL483), this protein is Probable GTP-binding protein EngB.